Here is a 275-residue protein sequence, read N- to C-terminus: Rhamnulose-1-phosphate aldolase (275 aa).

The active site involves Glu-117. 3 residues coordinate Zn(2+): His-141, His-143, and His-212.

This sequence belongs to the aldolase class II family. RhaD subfamily. In terms of assembly, homotetramer. Zn(2+) is required as a cofactor.

It is found in the cytoplasm. It catalyses the reaction L-rhamnulose 1-phosphate = (S)-lactaldehyde + dihydroxyacetone phosphate. It functions in the pathway carbohydrate degradation; L-rhamnose degradation; glycerone phosphate from L-rhamnose: step 3/3. Catalyzes the reversible cleavage of L-rhamnulose-1-phosphate to dihydroxyacetone phosphate (DHAP) and L-lactaldehyde. The sequence is that of Rhamnulose-1-phosphate aldolase from Citrobacter koseri (strain ATCC BAA-895 / CDC 4225-83 / SGSC4696).